Here is a 150-residue protein sequence, read N- to C-terminus: Phylloplanin (150 aa).

Positions 1-23 (MASAKIFLIFLLAALIATPAAFA) are cleaved as a signal peptide.

Post-translationally, probably covalently linked to cuticular lipids and/or trichome exudate diterpens or sugar esters in order to increase the solubility in exudate and the dispersion on the leaf surface. As to expression, expressed in small glandular secreting trichomes (SGTs).

The protein resides in the secreted. Functionally, inhibits spore germination and leaf infection by fungal pathogens. The chain is Phylloplanin from Nicotiana tabacum (Common tobacco).